The chain runs to 70 residues: Insulin (70 aa).

Disulfide bonds link cysteine 7–cysteine 56, cysteine 19–cysteine 69, and cysteine 55–cysteine 60. Residues 33–49 (FVDSLAGYSKHQNGGIS) constitute a propeptide, c peptide.

It belongs to the insulin family. As to quaternary structure, heterodimer of a B chain and an A chain linked by two disulfide bonds.

The protein resides in the secreted. In terms of biological role, insulin decreases blood glucose concentration. It increases cell permeability to monosaccharides, amino acids and fatty acids. It accelerates glycolysis, the pentose phosphate cycle, and glycogen synthesis in liver. The chain is Insulin (ins) from Torpedo marmorata (Marbled electric ray).